The chain runs to 328 residues: Phosphate acyltransferase (328 aa).

Belongs to the PlsX family. Homodimer. Probably interacts with PlsY.

Its subcellular location is the cytoplasm. It carries out the reaction a fatty acyl-[ACP] + phosphate = an acyl phosphate + holo-[ACP]. It functions in the pathway lipid metabolism; phospholipid metabolism. Catalyzes the reversible formation of acyl-phosphate (acyl-PO(4)) from acyl-[acyl-carrier-protein] (acyl-ACP). This enzyme utilizes acyl-ACP as fatty acyl donor, but not acyl-CoA. The chain is Phosphate acyltransferase from Staphylococcus saprophyticus subsp. saprophyticus (strain ATCC 15305 / DSM 20229 / NCIMB 8711 / NCTC 7292 / S-41).